The following is a 159-amino-acid chain: Large ribosomal subunit protein uL15 (159 aa).

The segment covering 1-18 has biased composition (basic and acidic residues); that stretch reads MKLNEIKDNEGSSKDRIR. The interval 1 to 39 is disordered; sequence MKLNEIKDNEGSSKDRIRVGRGIGSGKGKTGGRGVKGQK. A compositionally biased stretch (gly residues) spans 21–35; the sequence is RGIGSGKGKTGGRGV.

Belongs to the universal ribosomal protein uL15 family. Part of the 50S ribosomal subunit.

In terms of biological role, binds to the 23S rRNA. This chain is Large ribosomal subunit protein uL15, found in Allorhizobium ampelinum (strain ATCC BAA-846 / DSM 112012 / S4) (Agrobacterium vitis (strain S4)).